A 101-amino-acid polypeptide reads, in one-letter code: MSLTKADMAERLFEEVGLNKREAKELVELFFEEIRTALENGEPVKLSSFGNFELRDKNERPGRNPKTGEEIPISARRVVTFRPGQKLKSRVESYAGTREEQ.

This sequence belongs to the bacterial histone-like protein family. In terms of assembly, heterodimer of an alpha and a beta chain.

Its function is as follows. This protein is one of the two subunits of integration host factor, a specific DNA-binding protein that functions in genetic recombination as well as in transcriptional and translational control. The chain is Integration host factor subunit alpha from Halorhodospira halophila (strain DSM 244 / SL1) (Ectothiorhodospira halophila (strain DSM 244 / SL1)).